A 357-amino-acid chain; its full sequence is MRLSDFSFELPESLVAQYPLEKRSDCRLLCLNGETGTMTEGVFTDLLYQLEQGDLLVLNNTRVIPARVFGRKPSGGKLEILVERILSPNRVLVHLKSSKTPKLGAQFLLGDTANIPVTLMARHASLFELRFDVREDALMLLQSIGHIPLPPYIPRADEPKDHELYQTVYGQHLGAVAAPTAGLHFDNPLLNALKARGIETAFVTLHVGAGTFQPVKTDNITEHVMHSEYAEVSQEVVDAVLACKARGKRVVAVGTTSVRSLETAAQKTKNSFLTPFSGETSIFIYPGYQYQIVDALITNFHLPKSTLIMLVCAFAGYQNTLRAYKKAIDEKYRFFSYGDAMFISHNPKAAQENRVKK.

The protein belongs to the QueA family. As to quaternary structure, monomer.

It is found in the cytoplasm. The catalysed reaction is 7-aminomethyl-7-carbaguanosine(34) in tRNA + S-adenosyl-L-methionine = epoxyqueuosine(34) in tRNA + adenine + L-methionine + 2 H(+). It functions in the pathway tRNA modification; tRNA-queuosine biosynthesis. Its function is as follows. Transfers and isomerizes the ribose moiety from AdoMet to the 7-aminomethyl group of 7-deazaguanine (preQ1-tRNA) to give epoxyqueuosine (oQ-tRNA). The protein is S-adenosylmethionine:tRNA ribosyltransferase-isomerase of Hamiltonella defensa subsp. Acyrthosiphon pisum (strain 5AT).